A 145-amino-acid chain; its full sequence is Hemoglobin subunit beta-A (145 aa).

The Globin domain occupies 1 to 145 (MLTAEEKAAV…VANALAHRYH (145 aa)). 2 residues coordinate heme b: H62 and H91.

Belongs to the globin family. Heterotetramer of two alpha chains and two beta chains. In terms of tissue distribution, red blood cells.

Its function is as follows. Involved in oxygen transport from the lung to the various peripheral tissues. The chain is Hemoglobin subunit beta-A from Capra hircus (Goat).